The following is a 199-amino-acid chain: Elongation factor Ts (199 aa).

Residues 82–85 are involved in Mg(2+) ion dislocation from EF-Tu; the sequence is TDFV.

This sequence belongs to the EF-Ts family.

It is found in the cytoplasm. In terms of biological role, associates with the EF-Tu.GDP complex and induces the exchange of GDP to GTP. It remains bound to the aminoacyl-tRNA.EF-Tu.GTP complex up to the GTP hydrolysis stage on the ribosome. The polypeptide is Elongation factor Ts (Leptospira interrogans serogroup Icterohaemorrhagiae serovar copenhageni (strain Fiocruz L1-130)).